We begin with the raw amino-acid sequence, 106 residues long: Small ribosomal subunit protein uS10 (106 aa).

This sequence belongs to the universal ribosomal protein uS10 family. In terms of assembly, part of the 30S ribosomal subunit.

Functionally, involved in the binding of tRNA to the ribosomes. This Parasynechococcus marenigrum (strain WH8102) protein is Small ribosomal subunit protein uS10.